Consider the following 196-residue polypeptide: Somatotropin (196 aa).

The first 16 residues, 1-16 (MDKVILVLLMSLGASS), serve as a signal peptide directing secretion. Pyrrolidone carboxylic acid is present on glutamine 17. Histidine 35 provides a ligand contact to Zn(2+). Cysteine 67 and cysteine 169 form a disulfide bridge. Glutamate 178 provides a ligand contact to Zn(2+). An intrachain disulfide couples cysteine 186 to cysteine 194.

The protein belongs to the somatotropin/prolactin family.

The protein resides in the secreted. In terms of biological role, growth hormone plays an important role in growth control and is involved in the regulation of several anabolic processes. Implicated as an osmoregulatory substance important for seawater adaptation. This chain is Somatotropin (gh), found in Takifugu rubripes (Japanese pufferfish).